We begin with the raw amino-acid sequence, 143 residues long: UPF0102 protein Acid345_3985 (143 aa).

It belongs to the UPF0102 family.

This Koribacter versatilis (strain Ellin345) protein is UPF0102 protein Acid345_3985.